We begin with the raw amino-acid sequence, 391 residues long: Lipid-A-disaccharide synthase (391 aa).

Belongs to the LpxB family.

It carries out the reaction a lipid X + a UDP-2-N,3-O-bis[(3R)-3-hydroxyacyl]-alpha-D-glucosamine = a lipid A disaccharide + UDP + H(+). It participates in bacterial outer membrane biogenesis; LPS lipid A biosynthesis. Functionally, condensation of UDP-2,3-diacylglucosamine and 2,3-diacylglucosamine-1-phosphate to form lipid A disaccharide, a precursor of lipid A, a phosphorylated glycolipid that anchors the lipopolysaccharide to the outer membrane of the cell. This is Lipid-A-disaccharide synthase from Aromatoleum aromaticum (strain DSM 19018 / LMG 30748 / EbN1) (Azoarcus sp. (strain EbN1)).